A 31-amino-acid polypeptide reads, in one-letter code: Cytochrome b6-f complex subunit 6 (31 aa).

Residues 3–23 traverse the membrane as a helical segment; it reads TIISYFGFLLASIIFTLILFI.

The protein belongs to the PetL family. The 4 large subunits of the cytochrome b6-f complex are cytochrome b6, subunit IV (17 kDa polypeptide, PetD), cytochrome f and the Rieske protein, while the 4 small subunits are PetG, PetL, PetM and PetN. The complex functions as a dimer.

It is found in the plastid. The protein localises to the chloroplast thylakoid membrane. In terms of biological role, component of the cytochrome b6-f complex, which mediates electron transfer between photosystem II (PSII) and photosystem I (PSI), cyclic electron flow around PSI, and state transitions. PetL is important for photoautotrophic growth as well as for electron transfer efficiency and stability of the cytochrome b6-f complex. The polypeptide is Cytochrome b6-f complex subunit 6 (Abies homolepis (Nikko fir)).